Reading from the N-terminus, the 233-residue chain is Large ribosomal subunit protein uL1 (233 aa).

This sequence belongs to the universal ribosomal protein uL1 family. As to quaternary structure, part of the 50S ribosomal subunit.

Binds directly to 23S rRNA. The L1 stalk is quite mobile in the ribosome, and is involved in E site tRNA release. Functionally, protein L1 is also a translational repressor protein, it controls the translation of the L11 operon by binding to its mRNA. This chain is Large ribosomal subunit protein uL1, found in Geotalea uraniireducens (strain Rf4) (Geobacter uraniireducens).